Consider the following 184-residue polypeptide: Photosystem I assembly protein Ycf4 (184 aa).

Transmembrane regions (helical) follow at residues 22 to 42 (FCWACILFLGSLGFLLVGTSS) and 57 to 77 (ILFFPQGIVMSFYGIAGLFIS).

It belongs to the Ycf4 family.

It localises to the plastid. Its subcellular location is the chloroplast thylakoid membrane. In terms of biological role, seems to be required for the assembly of the photosystem I complex. The chain is Photosystem I assembly protein Ycf4 from Liriodendron tulipifera (Tuliptree).